Reading from the N-terminus, the 397-residue chain is 42.8 kDa protein in whiE locus (397 aa).

The tract at residues 1–22 (MTVSPVVATDAPSTDATRTTAT) is disordered. Over residues 8-22 (ATDAPSTDATRTTAT) the composition is skewed to low complexity. Residues 46-137 (VRVVLMLDVH…DTHSLRYSVL (92 aa)) enclose the ABM domain.

It belongs to the SchA/CurD family.

The protein is 42.8 kDa protein in whiE locus of Streptomyces coelicolor (strain ATCC BAA-471 / A3(2) / M145).